A 261-amino-acid polypeptide reads, in one-letter code: (S)-ureidoglycine aminohydrolase (261 aa).

A Cupin type-2 domain is found at 184-230; sequence LSFAPGASHGYIETHVQEHGAYILSGQGVYNLDNNWIPVKKGDYIFM. Residues Glu196, His198, His202, and Gln236 each coordinate Mn(2+). Position 196 (Glu196) interacts with substrate. Positions 236, 249, and 253 each coordinate substrate.

Belongs to the UGHY family. As to quaternary structure, monomer. It depends on Mn(2+) as a cofactor.

It localises to the cytoplasm. The catalysed reaction is (S)-2-ureidoglycine + H2O = (S)-ureidoglycolate + NH4(+). Involved in the anaerobic nitrogen utilization via the assimilation of allantoin. Catalyzes the second stereospecific hydrolysis reaction (deamination) of the allantoin degradation pathway, producing S-ureidoglycolate and ammonia from S-ureidoglycine. The protein is (S)-ureidoglycine aminohydrolase (allE) of Escherichia coli (strain K12).